The sequence spans 617 residues: Pyrophosphate--fructose 6-phosphate 1-phosphotransferase subunit alpha 2 (617 aa).

It belongs to the phosphofructokinase type A (PFKA) family. PPi-dependent PFK group II subfamily. Clade 'Long' sub-subfamily. Tetramer of two alpha (regulatory) and two beta (catalytic) chains. As to expression, expressed in roots and specific parts such as the trichomes of leaves, cotyledon veins, as well as in stamen and gynoecium of flowers.

It is found in the cytoplasm. It participates in carbohydrate degradation; glycolysis; D-glyceraldehyde 3-phosphate and glycerone phosphate from D-glucose: step 3/4. With respect to regulation, allosterically activated by fructose 2,6-bisphosphate. In terms of biological role, regulatory subunit of pyrophosphate--fructose 6-phosphate 1-phosphotransferase. In Arabidopsis thaliana (Mouse-ear cress), this protein is Pyrophosphate--fructose 6-phosphate 1-phosphotransferase subunit alpha 2.